The chain runs to 752 residues: Photosystem I P700 chlorophyll a apoprotein A1 (752 aa).

8 consecutive transmembrane segments (helical) span residues 73 to 96 (IFSA…FHGA), 159 to 182 (LYVT…FHYH), 198 to 222 (LNHH…HVSL), 294 to 312 (IAHH…GHMY), 349 to 372 (WHAN…HHMY), 388 to 414 (LSLF…IFMI), 436 to 458 (ALIS…LYIH), and 533 to 551 (FMVH…LILL). Residues Cys575 and Cys584 each contribute to the [4Fe-4S] cluster site. A run of 2 helical transmembrane segments spans residues 591–612 (HVFL…HFSW) and 666–688 (ISAY…MFLF). His677 contributes to the chlorophyll a' binding site. Chlorophyll a is bound by residues Met685 and Tyr693. Trp694 serves as a coordination point for phylloquinone. The helical transmembrane segment at 726–746 (AVGAAHYLLGGIATTWAFFLS) threads the bilayer.

This sequence belongs to the PsaA/PsaB family. As to quaternary structure, the PsaA/B heterodimer binds the P700 chlorophyll special pair and subsequent electron acceptors. PSI consists of a core antenna complex that captures photons, and an electron transfer chain that converts photonic excitation into a charge separation. The eukaryotic PSI reaction center is composed of at least 11 subunits. P700 is a chlorophyll a/chlorophyll a' dimer, A0 is one or more chlorophyll a, A1 is one or both phylloquinones and FX is a shared 4Fe-4S iron-sulfur center. serves as cofactor.

It is found in the plastid. It localises to the chloroplast thylakoid membrane. The enzyme catalyses reduced [plastocyanin] + hnu + oxidized [2Fe-2S]-[ferredoxin] = oxidized [plastocyanin] + reduced [2Fe-2S]-[ferredoxin]. Its function is as follows. PsaA and PsaB bind P700, the primary electron donor of photosystem I (PSI), as well as the electron acceptors A0, A1 and FX. PSI is a plastocyanin/cytochrome c6-ferredoxin oxidoreductase, converting photonic excitation into a charge separation, which transfers an electron from the donor P700 chlorophyll pair to the spectroscopically characterized acceptors A0, A1, FX, FA and FB in turn. Oxidized P700 is reduced on the lumenal side of the thylakoid membrane by plastocyanin or cytochrome c6. The chain is Photosystem I P700 chlorophyll a apoprotein A1 from Cyanidium caldarium (Red alga).